We begin with the raw amino-acid sequence, 152 residues long: Small ribosomal subunit protein uS19 (152 aa).

Belongs to the universal ribosomal protein uS19 family.

Its function is as follows. Protein S19 forms a complex with S13 that binds strongly to the 16S ribosomal RNA. The protein is Small ribosomal subunit protein uS19 (rps19) of Methanocaldococcus jannaschii (strain ATCC 43067 / DSM 2661 / JAL-1 / JCM 10045 / NBRC 100440) (Methanococcus jannaschii).